The chain runs to 386 residues: ATP phosphoribosyltransferase regulatory subunit (386 aa).

The protein belongs to the class-II aminoacyl-tRNA synthetase family. HisZ subfamily. As to quaternary structure, heteromultimer composed of HisG and HisZ subunits.

Its subcellular location is the cytoplasm. It functions in the pathway amino-acid biosynthesis; L-histidine biosynthesis; L-histidine from 5-phospho-alpha-D-ribose 1-diphosphate: step 1/9. Required for the first step of histidine biosynthesis. May allow the feedback regulation of ATP phosphoribosyltransferase activity by histidine. In Limosilactobacillus fermentum (strain NBRC 3956 / LMG 18251) (Lactobacillus fermentum), this protein is ATP phosphoribosyltransferase regulatory subunit.